A 122-amino-acid polypeptide reads, in one-letter code: Large ribosomal subunit protein uL14 (122 aa).

Belongs to the universal ribosomal protein uL14 family. In terms of assembly, part of the 50S ribosomal subunit. Forms a cluster with proteins L3 and L19. In the 70S ribosome, L14 and L19 interact and together make contacts with the 16S rRNA in bridges B5 and B8.

Its function is as follows. Binds to 23S rRNA. Forms part of two intersubunit bridges in the 70S ribosome. The polypeptide is Large ribosomal subunit protein uL14 (Chlamydia trachomatis serovar A (strain ATCC VR-571B / DSM 19440 / HAR-13)).